A 432-amino-acid polypeptide reads, in one-letter code: Sensor histidine kinase YrkQ (432 aa).

Over 1 to 12 (MAHLKFTLTKKL) the chain is Cytoplasmic. A helical transmembrane segment spans residues 13–33 (ALLIMVAAIVSGVIFLTLQKI). Residues 34 to 145 (TDDLIEGYLS…GFYSSRYYDL (112 aa)) lie on the Extracellular side of the membrane. Residues 146–166 (AFALDLLGATLIFLIIVLFGI) traverse the membrane as a helical segment. The region spanning 167 to 219 (RQSLRYLKTIHQEIHILEGGELDYEMTIKGHDELAMIAKSIEDLRKAFLDKLK) is the HAMP domain. Topologically, residues 167–432 (RQSLRYLKTI…IVLRFWNTKM (266 aa)) are cytoplasmic. Residues 234-432 (EMSHDMRTPL…IVLRFWNTKM (199 aa)) form the Histidine kinase domain. His237 carries the post-translational modification Phosphohistidine; by autocatalysis.

The protein localises to the cell membrane. The enzyme catalyses ATP + protein L-histidine = ADP + protein N-phospho-L-histidine.. In terms of biological role, member of the two-component regulatory system YrkQ/YrkP. Probably activates YrkP by phosphorylation. The protein is Sensor histidine kinase YrkQ (yrkQ) of Bacillus subtilis (strain 168).